We begin with the raw amino-acid sequence, 493 residues long: UDP-N-acetylmuramoyl-L-alanyl-D-glutamate--2,6-diaminopimelate ligase (493 aa).

Residues Leu-30 and Ser-32 each contribute to the UDP-N-acetyl-alpha-D-muramoyl-L-alanyl-D-glutamate site. 117-123 (GTNGKTT) contacts ATP. UDP-N-acetyl-alpha-D-muramoyl-L-alanyl-D-glutamate-binding positions include Asn-158, 159-160 (TT), Ser-186, Gln-192, and Arg-194. The residue at position 226 (Lys-226) is an N6-carboxylysine. Meso-2,6-diaminopimelate-binding positions include Arg-388, 412–415 (DNPR), Gly-463, and Glu-467. The Meso-diaminopimelate recognition motif signature appears at 412-415 (DNPR).

Belongs to the MurCDEF family. MurE subfamily. Mg(2+) is required as a cofactor. Post-translationally, carboxylation is probably crucial for Mg(2+) binding and, consequently, for the gamma-phosphate positioning of ATP.

It is found in the cytoplasm. It carries out the reaction UDP-N-acetyl-alpha-D-muramoyl-L-alanyl-D-glutamate + meso-2,6-diaminopimelate + ATP = UDP-N-acetyl-alpha-D-muramoyl-L-alanyl-gamma-D-glutamyl-meso-2,6-diaminopimelate + ADP + phosphate + H(+). It participates in cell wall biogenesis; peptidoglycan biosynthesis. In terms of biological role, catalyzes the addition of meso-diaminopimelic acid to the nucleotide precursor UDP-N-acetylmuramoyl-L-alanyl-D-glutamate (UMAG) in the biosynthesis of bacterial cell-wall peptidoglycan. This is UDP-N-acetylmuramoyl-L-alanyl-D-glutamate--2,6-diaminopimelate ligase from Vibrio parahaemolyticus serotype O3:K6 (strain RIMD 2210633).